Consider the following 540-residue polypeptide: Cytochrome P450 monooxygenase ptmG (540 aa).

N17 is a glycosylation site (N-linked (GlcNAc...) asparagine). Transmembrane regions (helical) follow at residues 20-40 (VMTL…YICI) and 325-345 (AAFL…FLLL). Heme is bound at residue C474.

The protein belongs to the cytochrome P450 family. The cofactor is heme.

It is found in the membrane. Its pathway is secondary metabolite biosynthesis. In terms of biological role, cytochrome P450 monooxygenase; part of the gene cluster that mediates the biosynthesis of the indole diterpenes penitrems. The geranylgeranyl diphosphate (GGPP) synthase ptmG catalyzes the first step in penitrem biosynthesis via conversion of farnesyl pyrophosphate and isopentyl pyrophosphate into geranylgeranyl pyrophosphate (GGPP). Condensation of indole-3-glycerol phosphate with GGPP by the prenyl transferase ptmC then forms 3-geranylgeranylindole (3-GGI). Epoxidation by the FAD-dependent monooxygenase ptmM leads to a epoxidized-GGI that is substrate of the terpene cyclase ptmB for cyclization to yield paspaline. Paspaline is subsequently converted to 13-desoxypaxilline by the cytochrome P450 monooxygenase ptmP, the latter being then converted to paxilline by the cytochrome P450 monooxygenase ptmQ. Paxilline is converted to beta-paxitriol via C-10 ketoreduction by the short-chain dehydrogenase ptmH which can be monoprenylated at the C-20 by the indole diterpene prenyltransferase ptmD. A two-step elimination (acetylation and elimination) process performed by the O-acetyltransferase ptmV and ptmI leads to the production of the prenylated form of penijanthine. The FAD-linked oxidoreductase ptmO then converts the prenylated form of penijanthine into PC-M5 which is in turn transformed into PC-M4 by the aromatic dimethylallyltransferase ptmE. Five sequential oxidative transformations performed by the cytochrome P450 monooxygenases ptmK, ptmU, ptmL, ptmN and ptmJ yield the various penitrem compounds. PtmK, ptmU and ptmM are involved in the formation of the key bicyclic ring of penitrem C via the formation of the intermediates secopenitrem D and penitrem D. PtmL catalyzes the epoxidation of penitrem D and C to yield penitrem B and F, respectively. PtmJ catalyzes the last benzylic hydroxylation to convert penitrem B to prenitrem E and penitrem F to penitrem A. The chain is Cytochrome P450 monooxygenase ptmG from Penicillium ochrochloron.